We begin with the raw amino-acid sequence, 442 residues long: UDP-N-acetylmuramate--L-alanine ligase (442 aa).

109-115 (GAHGKTS) lines the ATP pocket.

This sequence belongs to the MurCDEF family.

Its subcellular location is the cytoplasm. The enzyme catalyses UDP-N-acetyl-alpha-D-muramate + L-alanine + ATP = UDP-N-acetyl-alpha-D-muramoyl-L-alanine + ADP + phosphate + H(+). The protein operates within cell wall biogenesis; peptidoglycan biosynthesis. In terms of biological role, cell wall formation. The sequence is that of UDP-N-acetylmuramate--L-alanine ligase from Streptococcus pyogenes serotype M49 (strain NZ131).